The sequence spans 631 residues: Chaperone protein DnaK (631 aa).

Residue Thr-198 is modified to Phosphothreonine; by autocatalysis. A disordered region spans residues 602–631 (EAAGGAQQAGKDDVVDAEFTEVDDDKKKSA).

It belongs to the heat shock protein 70 family.

Functionally, acts as a chaperone. This chain is Chaperone protein DnaK, found in Rhodopseudomonas palustris (strain ATCC BAA-98 / CGA009).